The following is a 237-amino-acid chain: Purine nucleoside phosphorylase DeoD-type (237 aa).

Histidine 4 contributes to the a purine D-ribonucleoside binding site. Phosphate-binding positions include glycine 20, arginine 24, arginine 43, and 87 to 90 (RVGT). Residues 179 to 181 (EME) and 203 to 204 (SD) contribute to the a purine D-ribonucleoside site. The Proton donor role is filled by aspartate 204.

It belongs to the PNP/UDP phosphorylase family. In terms of assembly, homohexamer; trimer of homodimers.

It catalyses the reaction a purine D-ribonucleoside + phosphate = a purine nucleobase + alpha-D-ribose 1-phosphate. The catalysed reaction is a purine 2'-deoxy-D-ribonucleoside + phosphate = a purine nucleobase + 2-deoxy-alpha-D-ribose 1-phosphate. Functionally, catalyzes the reversible phosphorolytic breakdown of the N-glycosidic bond in the beta-(deoxy)ribonucleoside molecules, with the formation of the corresponding free purine bases and pentose-1-phosphate. The chain is Purine nucleoside phosphorylase DeoD-type from Streptococcus pyogenes serotype M5 (strain Manfredo).